The primary structure comprises 64 residues: Large ribosomal subunit protein bL33 (64 aa).

The interval Thr19–Asn40 is disordered.

This sequence belongs to the bacterial ribosomal protein bL33 family.

The chain is Large ribosomal subunit protein bL33 from Prochlorococcus marinus (strain MIT 9215).